A 430-amino-acid chain; its full sequence is Adenylosuccinate synthetase (430 aa).

Residues 12-18 (GDEGKGK) and 40-42 (GHT) contribute to the GTP site. The Proton acceptor role is filled by Asp13. Positions 13 and 40 each coordinate Mg(2+). IMP contacts are provided by residues 13 to 16 (DEGK), 38 to 41 (NAGH), Thr128, Arg142, Gln223, Thr238, and Arg302. The active-site Proton donor is the His41. 298–304 (VNTGRKR) contributes to the substrate binding site. Residues Arg304, 330-332 (KLD), and 412-414 (GVG) each bind GTP.

It belongs to the adenylosuccinate synthetase family. As to quaternary structure, homodimer. The cofactor is Mg(2+).

It is found in the cytoplasm. The enzyme catalyses IMP + L-aspartate + GTP = N(6)-(1,2-dicarboxyethyl)-AMP + GDP + phosphate + 2 H(+). Its pathway is purine metabolism; AMP biosynthesis via de novo pathway; AMP from IMP: step 1/2. Plays an important role in the de novo pathway of purine nucleotide biosynthesis. Catalyzes the first committed step in the biosynthesis of AMP from IMP. This is Adenylosuccinate synthetase from Corynebacterium aurimucosum (strain ATCC 700975 / DSM 44827 / CIP 107346 / CN-1) (Corynebacterium nigricans).